The primary structure comprises 510 residues: Cytochrome P450 monooxygenase btcC (510 aa).

The helical transmembrane segment at 1–21 (MSFPGVIFVVSFFPLLMGIAV) threads the bilayer. Cysteine 446 serves as a coordination point for heme.

This sequence belongs to the cytochrome P450 family. Heme serves as cofactor.

It localises to the membrane. It participates in secondary metabolite biosynthesis; terpenoid biosynthesis. Functionally, cytochrome P450 monooxygenase; part of the gene cluster that mediates the biosynthesis of betaestacins. The bifunctional terpene synthase btcA converts isopentenyl diphosphate (IPP) and dimethylallyl diphosphate (DMAPP) into the sesterterpene betaestacin I. The C-terminal prenyltransferase (PT) domain of btcA catalyzes formation of GFPP, whereas the N-terminal terpene cyclase (TC) domain catalyzes the cyclization of GFPP into betaestacin I. The cytochrome P450 monooxygenase btcB is then responsible for the six-step oxidation of betaestacin I to yield betaestacin II. The roles of the cytochrome P450 monooxygenase btcC and the alpha-ketoglutarate-dependent dioxygenase btcD have not been identified yet. The chain is Cytochrome P450 monooxygenase btcC from Neocamarosporium betae (Beet black rot fungus).